The primary structure comprises 393 residues: uncharacterized protein (393 aa).

In terms of domain architecture, TRAM spans 12 to 70; the sequence is APLLGSKIKLNIEKLAIGGAGVARHEGMVVFVPQAAPNEEILAEITLVKKNFMEARVVE. The [4Fe-4S] cluster site is built by cysteine 83, cysteine 89, cysteine 92, and cysteine 166. Positions 221, 250, 273, and 316 each coordinate S-adenosyl-L-methionine. The Nucleophile role is filled by cysteine 343.

It belongs to the class I-like SAM-binding methyltransferase superfamily. RNA M5U methyltransferase family.

This is an uncharacterized protein from Bdellovibrio bacteriovorus (strain ATCC 15356 / DSM 50701 / NCIMB 9529 / HD100).